The following is a 296-amino-acid chain: Small ribosomal subunit biogenesis GTPase RsgA (296 aa).

Positions lysine 63–tyrosine 224 constitute a CP-type G domain. GTP is bound by residues serine 112–aspartate 115 and glycine 167–threonine 175. Residues cysteine 248, cysteine 253, histidine 255, and cysteine 261 each coordinate Zn(2+).

This sequence belongs to the TRAFAC class YlqF/YawG GTPase family. RsgA subfamily. In terms of assembly, monomer. Associates with 30S ribosomal subunit, binds 16S rRNA. Requires Zn(2+) as cofactor.

Its subcellular location is the cytoplasm. Functionally, one of several proteins that assist in the late maturation steps of the functional core of the 30S ribosomal subunit. Helps release RbfA from mature subunits. May play a role in the assembly of ribosomal proteins into the subunit. Circularly permuted GTPase that catalyzes slow GTP hydrolysis, GTPase activity is stimulated by the 30S ribosomal subunit. The polypeptide is Small ribosomal subunit biogenesis GTPase RsgA (Limosilactobacillus fermentum (strain NBRC 3956 / LMG 18251) (Lactobacillus fermentum)).